We begin with the raw amino-acid sequence, 188 residues long: Ribosome-recycling factor (188 aa).

This sequence belongs to the RRF family.

The protein localises to the cytoplasm. In terms of biological role, responsible for the release of ribosomes from messenger RNA at the termination of protein biosynthesis. May increase the efficiency of translation by recycling ribosomes from one round of translation to another. The protein is Ribosome-recycling factor of Phenylobacterium zucineum (strain HLK1).